We begin with the raw amino-acid sequence, 460 residues long: Diguanylate cyclase DosC (460 aa).

His98 provides a ligand contact to heme. Residues 325 to 458 (TPLSVLIIDV…GRNRVELWKA (134 aa)) form the GGDEF domain. A Mg(2+)-binding site is contributed by Asp333. The substrate site is built by Asn341 and Asp350. Asp376 serves as a coordination point for Mg(2+). Asp376 serves as the catalytic Proton acceptor.

The cofactor is heme. Mg(2+) is required as a cofactor.

The enzyme catalyses 2 GTP = 3',3'-c-di-GMP + 2 diphosphate. It functions in the pathway purine metabolism; 3',5'-cyclic di-GMP biosynthesis. Its function is as follows. Globin-coupled heme-based oxygen sensor protein displaying diguanylate cyclase (DGC) activity in response to oxygen availability. Thus, catalyzes the synthesis of cyclic diguanylate (c-di-GMP) via the condensation of 2 GTP molecules. Cyclic-di-GMP is a second messenger which controls cell surface-associated traits in bacteria. This Shigella sonnei (strain Ss046) protein is Diguanylate cyclase DosC (dosC).